The following is a 66-amino-acid chain: Putative alpha-neurotoxin RjAa13 (66 aa).

One can recognise an LCN-type CS-alpha/beta domain in the interval 1–60; that stretch reads KEGYPVDWGNCKYECMSDAYCKDLCVDRKAKSGYCYKLNWSCYCEGLPDDSPIKTNGHCR. Intrachain disulfides connect C11–C59, C15–C35, C21–C42, and C25–C44.

This sequence belongs to the long (4 C-C) scorpion toxin superfamily. Sodium channel inhibitor family. Alpha subfamily. In terms of tissue distribution, expressed by the venom gland.

Its subcellular location is the secreted. In terms of biological role, alpha toxins bind voltage-independently at site-3 of sodium channels (Nav) and inhibits the inactivation of the activated channels, thereby blocking neuronal transmission. The sequence is that of Putative alpha-neurotoxin RjAa13 from Rhopalurus junceus (Caribbean blue scorpion).